The primary structure comprises 783 residues: Centrosomal protein of 89 kDa (783 aa).

The tract at residues 28–49 is disordered; it reads PKAAVPRTPPPRSPNPSPERPR. A compositionally biased stretch (pro residues) spans 34–45; that stretch reads RTPPPRSPNPSP. At Ser-50 the chain carries Phosphoserine. Disordered regions lie at residues 63 to 157 and 176 to 226; these read GRTV…DDLY and DENI…DITG. Over residues 94-107 the composition is skewed to polar residues; the sequence is ATTSQLRPRPNWQS. Composition is skewed to basic and acidic residues over residues 139–155 and 196–214; these read ELGDVSAREDRGGHSDD and QQKDGKHPVLNLKDEKPPL. Coiled-coil stretches lie at residues 234-333 and 369-719; these read EITR…SRYQ and LLLA…GELE.

The protein localises to the cytoplasm. It is found in the cytosol. Its subcellular location is the cytoskeleton. The protein resides in the microtubule organizing center. It localises to the centrosome. The protein localises to the spindle pole. It is found in the centriole. Its subcellular location is the mitochondrion intermembrane space. Functionally, required for ciliogenesis. Also plays a role in mitochondrial metabolism where it may modulate complex IV activity. The chain is Centrosomal protein of 89 kDa (CEP89) from Homo sapiens (Human).